A 1435-amino-acid chain; its full sequence is Protein SPP41 (1435 aa).

Disordered regions lie at residues 16 to 74 (VGNL…NIEI), 88 to 265 (VANA…ENTL), 286 to 309 (AKQTVDIQDNSHTDNTNNEDVEAQ), 322 to 424 (ELLS…DDEF), 442 to 482 (ETST…DSLD), 519 to 708 (SVSD…MKVP), and 934 to 972 (QQLDKQLPARSAGTEISSSESPDKATPDPHSNSTIAGHT). A compositionally biased stretch (acidic residues) spans 27–42 (GQEEGEVQGGEQEGDD). Composition is skewed to basic and acidic residues over residues 53 to 63 (IEPKHPDDSQH), 98 to 127 (EQAKPENHLENGSEHVTSDTADDNHEKEQQ), and 139 to 154 (LKSDGEPLRENTERRV). Residues 171–190 (QDDENLRMAILESLQELNTN) form the UIM domain. Residues 196 to 205 (EPEKHEHAAP) show a composition bias toward basic and acidic residues. The segment covering 211 to 223 (SKKSSKKKKKDKS) has biased composition (basic residues). Basic and acidic residues predominate over residues 224 to 234 (KNRESSKDKSS). The segment covering 235-249 (KKSKSSSHSKKHAKD) has biased composition (basic residues). The segment covering 286 to 301 (AKQTVDIQDNSHTDNT) has biased composition (polar residues). Positions 345 to 355 (KAVEPPRKPTA) are enriched in basic and acidic residues. Residues 367 to 383 (KPKKRPPQEKKKTKSKT) are compositionally biased toward basic residues. Residues 384–398 (SKAASTANKSPASES) are compositionally biased toward low complexity. 2 stretches are compositionally biased toward polar residues: residues 442 to 451 (ETSTHTATQD) and 459 to 482 (DFTSPVQSQYTTEDASTANDDSLD). Composition is skewed to basic and acidic residues over residues 524–548 (LPHDNLSRMEKKSVPKSSSKSEKKT), 610–628 (KNKELKEKEKLERQTAREE), and 637–652 (KQRLAEEQEELKKIVE). A compositionally biased stretch (basic residues) spans 665 to 674 (KSGKPKKPYR). A compositionally biased stretch (basic and acidic residues) spans 676–691 (WTPEELLKRSQEAEKP). A Nuclear localization signal motif is present at residues 683–699 (KRSQEAEKPRKVKKERK). The span at 692–706 (RKVKKERKKKEKKMK) shows a compositional bias: basic residues. Lys-981 participates in a covalent cross-link: Glycyl lysine isopeptide (Lys-Gly) (interchain with G-Cter in SUMO). Basic and acidic residues predominate over residues 1005–1014 (KLELTKRAES). The tract at residues 1005 to 1125 (KLELTKRAES…DSVNTTTGKP (121 aa)) is disordered. A Phosphoserine modification is found at Ser-1014. A compositionally biased stretch (polar residues) spans 1021 to 1032 (NVETAKETQSVQ). 2 stretches are compositionally biased toward basic and acidic residues: residues 1033–1082 (EIKE…EKIA) and 1091–1103 (LSDKKDGDEKSTL). Ser-1067 bears the Phosphoserine mark. Positions 1108–1123 (AQLTGNEPDSVNTTTG) are enriched in polar residues. A Glycyl lysine isopeptide (Lys-Gly) (interchain with G-Cter in SUMO) cross-link involves residue Lys-1154.

Interacts with PRP8 and RAP1.

The protein resides in the nucleus. Functionally, negative regulator of PRP3 and PRP4 genes. The chain is Protein SPP41 (SPP41) from Saccharomyces cerevisiae (strain ATCC 204508 / S288c) (Baker's yeast).